The chain runs to 393 residues: Formate-dependent phosphoribosylglycinamide formyltransferase (393 aa).

Residues 22 to 23 (EL) and Glu82 contribute to the N(1)-(5-phospho-beta-D-ribosyl)glycinamide site. ATP-binding positions include Arg114, Lys155, 160 to 165 (SSGKGQ), 195 to 198 (EGFI), and Glu203. The region spanning 119–308 (RLAAEELDLP…QFALHARAIL (190 aa)) is the ATP-grasp domain. Residues Glu267 and Glu279 each coordinate Mg(2+). Residues Asp286, Lys356, and 363-364 (RR) each bind N(1)-(5-phospho-beta-D-ribosyl)glycinamide.

This sequence belongs to the PurK/PurT family. Homodimer.

It carries out the reaction N(1)-(5-phospho-beta-D-ribosyl)glycinamide + formate + ATP = N(2)-formyl-N(1)-(5-phospho-beta-D-ribosyl)glycinamide + ADP + phosphate + H(+). The protein operates within purine metabolism; IMP biosynthesis via de novo pathway; N(2)-formyl-N(1)-(5-phospho-D-ribosyl)glycinamide from N(1)-(5-phospho-D-ribosyl)glycinamide (formate route): step 1/1. Its function is as follows. Involved in the de novo purine biosynthesis. Catalyzes the transfer of formate to 5-phospho-ribosyl-glycinamide (GAR), producing 5-phospho-ribosyl-N-formylglycinamide (FGAR). Formate is provided by PurU via hydrolysis of 10-formyl-tetrahydrofolate. The polypeptide is Formate-dependent phosphoribosylglycinamide formyltransferase (Pseudomonas fluorescens (strain ATCC BAA-477 / NRRL B-23932 / Pf-5)).